A 568-amino-acid polypeptide reads, in one-letter code: Mannitol 2-dehydrogenase (568 aa).

109–120 (IVHVGVGGFHRA) is a binding site for NAD(+).

This sequence belongs to the mannitol dehydrogenase family. Monomer.

It carries out the reaction D-mannitol + NAD(+) = D-fructose + NADH + H(+). In terms of biological role, catalyzes the NAD(H)-dependent interconversion of D-fructose and D-mannitol in the mannitol metabolic pathway. The protein is Mannitol 2-dehydrogenase of Phaeosphaeria nodorum (strain SN15 / ATCC MYA-4574 / FGSC 10173) (Glume blotch fungus).